A 228-amino-acid chain; its full sequence is Cutinase CUT1 (228 aa).

The N-terminal stretch at 1 to 16 (MQFITVALTLIALASA) is a signal peptide. The cysteines at positions 49 and 127 are disulfide-linked. The active-site Nucleophile is the serine 138. A disulfide bond links cysteine 189 and cysteine 196. N-linked (GlcNAc...) asparagine glycosylation is present at asparagine 190. Aspartate 193 is a catalytic residue. Residue histidine 206 is the Proton donor/acceptor of the active site.

Belongs to the cutinase family. The 2 disulfide bonds play a critical role in holding the catalytic residues in juxta-position; reduction of the disulfide bridges results in the complete inactivation of the enzyme.

Its subcellular location is the secreted. It catalyses the reaction cutin + H2O = cutin monomers.. Its function is as follows. Catalyzes the hydrolysis of complex carboxylic polyesters found in the cell wall of plants. Degrades cutin, a macromolecule that forms the structure of the plant cuticle. Required for efficient penetration of the host plant cuticle by the appressorium during the initial stage of fungal infection. In Pyricularia oryzae (strain 70-15 / ATCC MYA-4617 / FGSC 8958) (Rice blast fungus), this protein is Cutinase CUT1.